The primary structure comprises 77 residues: Dermatoxin-A1 (77 aa).

Positions 1-22 (MAFLKKSLFLVLFLGLVPLFLC) are cleaved as a signal peptide. A propeptide spanning residues 23-42 (ENEKREGENEKEENDDQSEE) is cleaved from the precursor. The residue at position 76 (Gln-76) is a Glutamine amide.

This sequence belongs to the frog skin active peptide (FSAP) family. Dermatoxin subfamily. As to expression, expressed by the skin glands.

The protein localises to the secreted. In terms of biological role, possesses a potent antimicrobial activity against Gram-positive and Gram-negative bacteria. Probably acts by disturbing membrane functions with its amphipathic structure. The sequence is that of Dermatoxin-A1 from Agalychnis annae (Blue-sided leaf frog).